A 1097-amino-acid chain; its full sequence is Kinesin-like protein KIF1C (1097 aa).

The region spanning 5-347 (SVKVAVRVRP…LRYADRTKQI (343 aa)) is the Kinesin motor domain. An ATP-binding site is contributed by 96-103 (GQTGAGKS). Position 294 is a phosphoserine (S294). Positions 358–380 (NARLIRELQEEVARLRELLMAQG) form a coiled coil. Residues 397–434 (GGVLPAASSPPAPASPSSPPPHNGELEPSFSPSAEPQI) form a disordered region. Over residues 404–418 (SSPPAPASPSSPPPH) the composition is skewed to pro residues. Residues 437–478 (EEAMERLQETEKIIAELNETWEEKLRKTEALRMEREALLAEM) are a coiled coil. S491 is subject to Phosphoserine. The region spanning 520–587 (TRVGQVDVDI…LKSGNRIVMG (68 aa)) is the FHA domain. Positions 630–671 (EQQGIDIKLEMEKRLQDLENQYRKEKEEADLLLEQQRLYADS) form a coiled coil. S671 and S673 each carry phosphoserine. A coiled-coil region spans residues 824–868 (AEVEDLRAHIDKLTGILQEVKLQNSSKDRELQALRDRMLRMERVI). Disordered regions lie at residues 897–921 (EAVS…ERVS) and 946–1097 (QGLQ…GAAV). S911 is modified (phosphoserine). A compositionally biased stretch (gly residues) spans 949-958 (QGSGGRGGGL). Over residues 997-1015 (GPQPPEEVTAPPPPPNRRP) the composition is skewed to pro residues. A compositionally biased stretch (basic residues) spans 1016 to 1026 (PSPRRPHRPRR). S1028 is subject to Phosphoserine. R1036 is subject to Omega-N-methylarginine. Residues 1059–1077 (QPQPYPAQRPGPRYPPYTT) are compositionally biased toward pro residues. T1077 bears the Phosphothreonine mark. S1086 bears the Phosphoserine mark. Basic and acidic residues predominate over residues 1086 to 1097 (SAPDLKESGAAV).

Belongs to the TRAFAC class myosin-kinesin ATPase superfamily. Kinesin family. Unc-104 subfamily.

The protein resides in the cytoplasm. It is found in the cytoskeleton. Probable motor protein. The polypeptide is Kinesin-like protein KIF1C (Kif1c) (Rattus norvegicus (Rat)).